A 406-amino-acid polypeptide reads, in one-letter code: Zinc finger protein 57 (406 aa).

The 72-residue stretch at 17 to 88 (VRYEDVAVSF…TCTGVFKGGP (72 aa)) folds into the KRAB domain. Residues 57–77 (ESKKKPQEPNPNLKDKDDDKS) form a disordered region. The C2H2-type 1; degenerate zinc finger occupies 90 to 113 (FFCLTCGKCFKKNTFLFNHQFPVR). C2H2-type zinc fingers lie at residues 140–162 (FFCN…RRAH) and 168–190 (RSCP…LKVH). The tract at residues 194-226 (KPVAGSHVKVHQNKPVASNQKQKGRVPPTTRES) is disordered. The C2H2-type 4 zinc finger occupies 270 to 292 (VYCPYCRITFTMRTCLLNHLKIH). Residues 318 to 337 (YNCPVCDSSFRGKESLLNHL) form a C2H2-type 5; degenerate zinc finger. Residues 372–406 (SRKRRRKRISSDSSETEGPSGSDEVMEVDTDSDLS) form a disordered region. The segment covering 395 to 406 (EVMEVDTDSDLS) has biased composition (acidic residues).

This sequence belongs to the krueppel C2H2-type zinc-finger protein family. As to expression, expressed in oligodendrocytes and at lower levels in astrocytes.

It is found in the nucleus. Functionally, transcription regulator required to maintain maternal and paternal gene imprinting, a process by which gene expression is restricted in a parent of origin-specific manner by epigenetic modification of genomic DNA and chromatin, including DNA methylation. Acts by controlling DNA methylation during the earliest multicellular stages of development at multiple imprinting control regions (ICRs). Acts together with ZNF445. Required for the establishment of maternal methylation imprints at SNRPN locus. Acts as a transcriptional repressor in Schwann cells. Binds to a 5'-TGCCGC-3' consensus sequence and recognizes the methylated CpG within this element. This Rattus norvegicus (Rat) protein is Zinc finger protein 57 (Zfp57).